Here is a 204-residue protein sequence, read N- to C-terminus: ATP phosphoribosyltransferase (204 aa).

The protein belongs to the ATP phosphoribosyltransferase family. Short subfamily. In terms of assembly, heteromultimer composed of HisG and HisZ subunits.

The protein resides in the cytoplasm. The enzyme catalyses 1-(5-phospho-beta-D-ribosyl)-ATP + diphosphate = 5-phospho-alpha-D-ribose 1-diphosphate + ATP. It participates in amino-acid biosynthesis; L-histidine biosynthesis; L-histidine from 5-phospho-alpha-D-ribose 1-diphosphate: step 1/9. Functionally, catalyzes the condensation of ATP and 5-phosphoribose 1-diphosphate to form N'-(5'-phosphoribosyl)-ATP (PR-ATP). Has a crucial role in the pathway because the rate of histidine biosynthesis seems to be controlled primarily by regulation of HisG enzymatic activity. In Staphylococcus epidermidis (strain ATCC 35984 / DSM 28319 / BCRC 17069 / CCUG 31568 / BM 3577 / RP62A), this protein is ATP phosphoribosyltransferase.